A 141-amino-acid chain; its full sequence is Phage-like element PBSX protein XkdS (141 aa).

The protein to B.subtilis YqbS.

The polypeptide is Phage-like element PBSX protein XkdS (xkdS) (Bacillus subtilis (strain 168)).